Here is a 626-residue protein sequence, read N- to C-terminus: Basic helix-loop-helix ARNT-like protein 1 (626 aa).

The tract at residues 1 to 58 is disordered; sequence MADQRMDISSTISDFMSPGPTDLLSGSLSTSGVDCNRKRKGSATDYQESMDTDKDDPH. A Phosphoserine; by GSK3-beta modification is found at Ser17. Positions 17–32 are enriched in low complexity; sequence SPGPTDLLSGSLSTSG. At Thr21 the chain carries Phosphothreonine; by GSK3-beta. The Nuclear localization signal signature appears at 36-41; sequence NRKRKG. A bHLH domain is found at 72–125; that stretch reads NAREAHSQIEKRRRDKMNSFIDELASLVPTCNAMSRKLDKLTVLRMAVQHMKTL. A Phosphoserine modification is found at Ser78. Ser90 is subject to Phosphoserine; by CK2. Residues 142-152 carry the Nuclear export signal 1 motif; sequence LSDDELKHLIL. The 73-residue stretch at 143–215 folds into the PAS 1 domain; that stretch reads SDDELKHLIL…EQLSSSDTAP (73 aa). A Glycyl lysine isopeptide (Lys-Gly) (interchain with G-Cter in SUMO2 and SUMO3) cross-link involves residue Lys252. Lys259 participates in a covalent cross-link: Glycyl lysine isopeptide (Lys-Gly) (interchain with G-Cter in SUMO); alternate. Residue Lys259 forms a Glycyl lysine isopeptide (Lys-Gly) (interchain with G-Cter in SUMO2); alternate linkage. Positions 326 to 396 constitute a PAS 2 domain; the sequence is PQPVNGEIRV…ECHRQVLQTR (71 aa). Residues 361-369 carry the Nuclear export signal 2 motif; the sequence is LAYLPQELL. The 44-residue stretch at 401 to 444 folds into the PAC domain; sequence TNCYKFKIKDGSFITLRSRWFSFMNPWTKEVEYIVSTNTVVLAN. Disordered stretches follow at residues 459–492 and 511–595; these read SPHS…RAGA and GSSP…SPSN. The tract at residues 508–588 is interaction with CIART; sequence RIRGSSPSSC…IGIDMIDNDQ (81 aa). Residues 511–521 show a composition bias toward low complexity; sequence GSSPSSCGSSP. At Lys538 the chain carries N6-acetyllysine.

Component of the circadian clock oscillator which includes the CRY1/2 proteins, CLOCK or NPAS2, BMAL1 or BMAL2, CSNK1D and/or CSNK1E, TIMELESS and the PER1/2/3 proteins. Forms a heterodimer with CLOCK. The CLOCK-BMAL1 heterodimer is required for E-box-dependent transactivation, for CLOCK nuclear translocation and degradation, and, for phosphorylation of both CLOCK and BMAL1. Part of a nuclear complex which also includes RACK1 and PRKCA; RACK1 and PRKCA are recruited to the complex in a circadian manner. Interacts with NPAS2. Interacts with EZH2. Interacts with SUMO3. Interacts with SIRT1. Interacts with AHR. Interacts with ID1, ID2 and ID3. Interacts with DDX4. Interacts with OGT. Interacts with EED and SUZ12. Interacts with MTA1. Interacts with CIART. Interacts with HSP90. Interacts with KAT2B and EP300. Interacts with BHLHE40/DEC1 and BHLHE41/DEC2. Interacts with RELB and the interaction is enhanced in the presence of CLOCK. Interacts with PER1, PER2, CRY1 and CRY2 and this interaction requires a translocation to the nucleus. Interaction of the CLOCK-BMAL1 heterodimer with PER or CRY inhibits transcription activation. Interaction of the CLOCK-BMAL1 with CRY1 is independent of DNA but with PER2 is off DNA. The CLOCK-BMAL1 heterodimer interacts with GSK3B. Interacts with KDM5A. Interacts with KMT2A; in a circadian manner. Interacts with UBE3A. Interacts with PRKCG. Interacts with MAGEL2. Interacts with NCOA2. Interacts with THRAP3. The CLOCK-BMAL1 heterodimer interacts with PASD1. Interacts with PASD1. Interacts with USP9X. Interacts with PIWIL2 (via PIWI domain). Interacts with HDAC3. Interacts with HNF4A. In terms of processing, ubiquitinated, leading to its proteasomal degradation. Deubiquitinated by USP9X. O-glycosylated; contains O-GlcNAc. O-glycosylation by OGT prevents protein degradation by inhibiting ubiquitination. It also stabilizes the CLOCK-BMAL1 heterodimer thereby increasing CLOCK-BMAL1-mediated transcription of genes in the negative loop of the circadian clock such as PER1/2/3 and CRY1/2. Post-translationally, acetylated on Lys-538 by CLOCK during the repression phase of the circadian cycle. Acetylation facilitates recruitment of CRY1 protein and initiates the repression phase of the circadian cycle. Acetylated at Lys-538 by KAT5 during the activation phase of the cycle, leading to recruitment of the positive transcription elongation factor b (P-TEFb) and BRD4, followed by productive elongation of circadian transcripts. Deacetylated by SIRT1, which may result in decreased protein stability. In terms of processing, phosphorylated upon dimerization with CLOCK. Phosphorylation enhances the transcriptional activity, alters the subcellular localization and decreases the stability of the CLOCK-BMAL1 heterodimer by promoting its degradation. Phosphorylation shows circadian variations in the liver with a peak between CT10 to CT14. Phosphorylation at Ser-90 by CK2 is essential for its nuclear localization, its interaction with CLOCK and controls CLOCK nuclear entry. Dephosphorylation at Ser-78 is important for dimerization with CLOCK and transcriptional activity. Sumoylated on Lys-259 upon dimerization with CLOCK. Predominantly conjugated to poly-SUMO2/3 rather than SUMO1 and the level of these conjugates undergo rhythmic variation, peaking at CT9-CT12. Sumoylation localizes it exclusively to the PML body and promotes its ubiquitination in the PML body, ubiquitin-dependent proteasomal degradation and the transcriptional activity of the CLOCK-BMAL1 heterodimer. Post-translationally, undergoes lysosome-mediated degradation in a time-dependent manner in the liver.

It localises to the nucleus. Its subcellular location is the cytoplasm. The protein localises to the PML body. In terms of biological role, transcriptional activator which forms a core component of the circadian clock. The circadian clock, an internal time-keeping system, regulates various physiological processes through the generation of approximately 24 hour circadian rhythms in gene expression, which are translated into rhythms in metabolism and behavior. It is derived from the Latin roots 'circa' (about) and 'diem' (day) and acts as an important regulator of a wide array of physiological functions including metabolism, sleep, body temperature, blood pressure, endocrine, immune, cardiovascular, and renal function. Consists of two major components: the central clock, residing in the suprachiasmatic nucleus (SCN) of the brain, and the peripheral clocks that are present in nearly every tissue and organ system. Both the central and peripheral clocks can be reset by environmental cues, also known as Zeitgebers (German for 'timegivers'). The predominant Zeitgeber for the central clock is light, which is sensed by retina and signals directly to the SCN. The central clock entrains the peripheral clocks through neuronal and hormonal signals, body temperature and feeding-related cues, aligning all clocks with the external light/dark cycle. Circadian rhythms allow an organism to achieve temporal homeostasis with its environment at the molecular level by regulating gene expression to create a peak of protein expression once every 24 hours to control when a particular physiological process is most active with respect to the solar day. Transcription and translation of core clock components (CLOCK, NPAS2, BMAL1, BMAL2, PER1, PER2, PER3, CRY1 and CRY2) plays a critical role in rhythm generation, whereas delays imposed by post-translational modifications (PTMs) are important for determining the period (tau) of the rhythms (tau refers to the period of a rhythm and is the length, in time, of one complete cycle). A diurnal rhythm is synchronized with the day/night cycle, while the ultradian and infradian rhythms have a period shorter and longer than 24 hours, respectively. Disruptions in the circadian rhythms contribute to the pathology of cardiovascular diseases, cancer, metabolic syndromes and aging. A transcription/translation feedback loop (TTFL) forms the core of the molecular circadian clock mechanism. Transcription factors, CLOCK or NPAS2 and BMAL1 or BMAL2, form the positive limb of the feedback loop, act in the form of a heterodimer and activate the transcription of core clock genes and clock-controlled genes (involved in key metabolic processes), harboring E-box elements (5'-CACGTG-3') within their promoters. The core clock genes: PER1/2/3 and CRY1/2 which are transcriptional repressors form the negative limb of the feedback loop and interact with the CLOCK|NPAS2-BMAL1|BMAL2 heterodimer inhibiting its activity and thereby negatively regulating their own expression. This heterodimer also activates nuclear receptors NR1D1/2 and RORA/B/G, which form a second feedback loop and which activate and repress BMAL1 transcription, respectively. BMAL1 positively regulates myogenesis and negatively regulates adipogenesis via the transcriptional control of the genes of the canonical Wnt signaling pathway. Plays a role in normal pancreatic beta-cell function; regulates glucose-stimulated insulin secretion via the regulation of antioxidant genes NFE2L2/NRF2 and its targets SESN2, PRDX3, CCLC and CCLM. Negatively regulates the mTORC1 signaling pathway; regulates the expression of MTOR and DEPTOR. Controls diurnal oscillations of Ly6C inflammatory monocytes; rhythmic recruitment of the PRC2 complex imparts diurnal variation to chemokine expression that is necessary to sustain Ly6C monocyte rhythms. Regulates the expression of HSD3B2, STAR, PTGS2, CYP11A1, CYP19A1 and LHCGR in the ovary and also the genes involved in hair growth. Plays an important role in adult hippocampal neurogenesis by regulating the timely entry of neural stem/progenitor cells (NSPCs) into the cell cycle and the number of cell divisions that take place prior to cell-cycle exit. Regulates the circadian expression of CIART and KLF11. The CLOCK-BMAL1 heterodimer regulates the circadian expression of SERPINE1/PAI1, VWF, B3, CCRN4L/NOC, NAMPT, DBP, MYOD1, PPARGC1A, PPARGC1B, SIRT1, GYS2, F7, NGFR, GNRHR, BHLHE40/DEC1, ATF4, MTA1, KLF10 and also genes implicated in glucose and lipid metabolism. Promotes rhythmic chromatin opening, regulating the DNA accessibility of other transcription factors. May play a role in spermatogenesis; contributes to the chromatoid body assembly and physiology. The NPAS2-BMAL1 heterodimer positively regulates the expression of MAOA, F7 and LDHA and modulates the circadian rhythm of daytime contrast sensitivity by regulating the rhythmic expression of adenylate cyclase type 1 (ADCY1) in the retina. The preferred binding motif for the CLOCK-BMAL1 heterodimer is 5'-CACGTGA-3', which contains a flanking adenine nucleotide at the 3-prime end of the canonical 6-nucleotide E-box sequence. CLOCK specifically binds to the half-site 5'-CAC-3', while BMAL1 binds to the half-site 5'-GTGA-3'. The CLOCK-BMAL1 heterodimer also recognizes the non-canonical E-box motifs 5'-AACGTGA-3' and 5'-CATGTGA-3'. Essential for the rhythmic interaction of CLOCK with ASS1 and plays a critical role in positively regulating CLOCK-mediated acetylation of ASS1. Plays a role in protecting against lethal sepsis by limiting the expression of immune checkpoint protein CD274 in macrophages in a PKM2-dependent manner. Regulates the diurnal rhythms of skeletal muscle metabolism via transcriptional activation of genes promoting triglyceride synthesis (DGAT2) and metabolic efficiency (COQ10B). The protein is Basic helix-loop-helix ARNT-like protein 1 of Rattus norvegicus (Rat).